The sequence spans 95 residues: uncharacterized protein (95 aa).

A helical transmembrane segment spans residues 12–32 (IASLVVSVVVLLIGLILWFFI).

It is found in the cell membrane. This is an uncharacterized protein from Escherichia coli O6:H1 (strain CFT073 / ATCC 700928 / UPEC).